A 256-amino-acid polypeptide reads, in one-letter code: Pimeloyl-[acyl-carrier protein] methyl ester esterase (256 aa).

Residues 15–242 (HLVLLHGWGL…AAHAPFISHP (228 aa)) form the AB hydrolase-1 domain. Substrate-binding positions include tryptophan 22, 82 to 83 (SL), and 143 to 147 (FLALQ). The active-site Nucleophile is serine 82. Catalysis depends on residues aspartate 207 and histidine 235. Residue histidine 235 coordinates substrate.

Belongs to the AB hydrolase superfamily. Carboxylesterase BioH family. Monomer.

The protein resides in the cytoplasm. The catalysed reaction is 6-carboxyhexanoyl-[ACP] methyl ester + H2O = 6-carboxyhexanoyl-[ACP] + methanol + H(+). Its pathway is cofactor biosynthesis; biotin biosynthesis. The physiological role of BioH is to remove the methyl group introduced by BioC when the pimeloyl moiety is complete. It allows to synthesize pimeloyl-ACP via the fatty acid synthetic pathway through the hydrolysis of the ester bonds of pimeloyl-ACP esters. The protein is Pimeloyl-[acyl-carrier protein] methyl ester esterase of Escherichia coli (strain K12 / MC4100 / BW2952).